Reading from the N-terminus, the 412-residue chain is uncharacterized protein (412 aa).

Cysteine 62, cysteine 68, cysteine 71, and cysteine 143 together coordinate [4Fe-4S] cluster. Glutamine 243, phenylalanine 270, glutamate 290, and aspartate 338 together coordinate S-adenosyl-L-methionine. Cysteine 364 (nucleophile) is an active-site residue.

This sequence belongs to the class I-like SAM-binding methyltransferase superfamily. RNA M5U methyltransferase family.

This is an uncharacterized protein from Mesorhizobium japonicum (strain LMG 29417 / CECT 9101 / MAFF 303099) (Mesorhizobium loti (strain MAFF 303099)).